A 276-amino-acid chain; its full sequence is Radial spoke head protein 9 homolog (276 aa).

Belongs to the flagellar radial spoke RSP9 family. As to quaternary structure, component of the axonemal radial spoke 1 (RS1) and 2 (RS2) complexes, at least composed of spoke head proteins RSPH1, RSPH3, RSPH9 and the cilia-specific component RSPH4A or sperm-specific component RSPH6A, spoke stalk proteins RSPH14, DNAJB13, DYDC1, ROPN1L and NME5, and the RS1 complex-specific anchor protein IQUB. Interacts with IQUB. Interacts with RSPH3B. Interacts with RSPH4A. Interacts with RSPH6A. Interacts with CFAP61. Interacts with LRRC23.

Its subcellular location is the cytoplasm. It localises to the cytoskeleton. It is found in the cilium axoneme. The protein resides in the flagellum axoneme. The protein localises to the cell projection. Its subcellular location is the kinocilium. In terms of biological role, functions as part of axonemal radial spoke complexes that play an important part in the motility of sperm and cilia. Essential for both the radial spoke head assembly and the central pair microtubule stability in ependymal motile cilia. Required for motility of olfactory and neural cilia and for the structural integrity of ciliary axonemes in both 9+0 and 9+2 motile cilia. The chain is Radial spoke head protein 9 homolog (RSPH9) from Bos taurus (Bovine).